We begin with the raw amino-acid sequence, 172 residues long: uncharacterized protein (172 aa).

The region spanning 1–148 (MANSQKVIDV…TIHDFFENGN (148 aa)) is the Ferritin-like diiron domain.

This is an uncharacterized protein from Ureaplasma urealyticum (Ureaplasma urealyticum biotype 2).